The chain runs to 375 residues: Acyl-coenzyme A diphosphatase NUDT19 (375 aa).

One can recognise a Nudix hydrolase domain in the interval Ala-15–Glu-263. Positions Leu-91 to Gly-116 are disordered. Residues Gly-116–Gly-137 carry the Nudix box motif. Mg(2+)-binding residues include Glu-131 and Glu-135. The Microbody targeting signal signature appears at Ser-373–Leu-375.

This sequence belongs to the Nudix hydrolase family. In terms of assembly, monomer. It depends on Mg(2+) as a cofactor. The cofactor is Mn(2+).

The protein localises to the peroxisome. It carries out the reaction an acyl-CoA + H2O = an acyl-4'-phosphopantetheine + adenosine 3',5'-bisphosphate + 2 H(+). The enzyme catalyses CoA + H2O = (R)-4'-phosphopantetheine + adenosine 3',5'-bisphosphate + 2 H(+). It catalyses the reaction hexanoyl-CoA + H2O = hexanoyl-4'-phosphopantetheine + adenosine 3',5'-bisphosphate + 2 H(+). The catalysed reaction is octanoyl-CoA + H2O = S-octanoyl-4'-phosphopantetheine + adenosine 3',5'-bisphosphate + 2 H(+). It carries out the reaction butanoyl-CoA + H2O = S-butanoyl-4'-phosphopantetheine + adenosine 3',5'-bisphosphate + 2 H(+). The enzyme catalyses propanoyl-CoA + H2O = propanoyl-4'-phosphopantetheine + adenosine 3',5'-bisphosphate + 2 H(+). It catalyses the reaction malonyl-CoA + H2O = malonyl-4'-phosphopantetheine + adenosine 3',5'-bisphosphate + 2 H(+). The catalysed reaction is succinyl-CoA + H2O = succinyl-4'-phosphopantetheine + adenosine 3',5'-bisphosphate + 2 H(+). It carries out the reaction choloyl-CoA + H2O = S-choloyl-4'-phosphopantetheine + adenosine 3',5'-bisphosphate + 2 H(+). The enzyme catalyses 4,8-dimethylnonanoyl-CoA + H2O = S-(4,8-dimethylnonanoyl)-4'-phosphopantetheine + adenosine 3',5'-bisphosphate + 2 H(+). It catalyses the reaction (9Z,12Z,15Z)-octadecatrienoyl-CoA + H2O = S-(9Z,12Z,15Z-octadecatrienoyl)-4'-phosphopantetheine + adenosine 3',5'-bisphosphate + 2 H(+). The catalysed reaction is (9Z,12Z)-octadecadienoyl-CoA + H2O = S-(9Z,12Z-octadecadienoyl)-4'-phosphopantetheine + adenosine 3',5'-bisphosphate + 2 H(+). It carries out the reaction (9Z)-hexadecenoyl-CoA + H2O = S-(9Z-hexadecenoyl)-4'-phosphopantetheine + adenosine 3',5'-bisphosphate + 2 H(+). The enzyme catalyses (9Z)-tetradecenoyl-CoA + H2O = S-(9Z-tetradecenoyl)-4'-phosphopantetheine + adenosine 3',5'-bisphosphate + 2 H(+). It catalyses the reaction (6Z)-octenoyl-CoA + H2O = S-(6Z-octenoyl)-4'-phosphopantetheine + adenosine 3',5'-bisphosphate + 2 H(+). The catalysed reaction is hexadecanoyl-CoA + H2O = S-hexadecanoyl-4'-phosphopantetheine + adenosine 3',5'-bisphosphate + 2 H(+). It carries out the reaction tetradecanoyl-CoA + H2O = tetradecanoyl-4'-phosphopantetheine + adenosine 3',5'-bisphosphate + 2 H(+). The enzyme catalyses dodecanoyl-CoA + H2O = S-dodecanoyl-4'-phosphopantetheine + adenosine 3',5'-bisphosphate + 2 H(+). It catalyses the reaction a 5'-end CoA-ribonucleoside in mRNA + H2O = a 5'-end phospho-adenosine-phospho-ribonucleoside in mRNA + (R)-4'-phosphopantetheine + 2 H(+). Fatty acyl-coenzyme A (CoA) diphosphatase that hydrolyzes fatty acyl-CoA to yield acyl-4'-phosphopantetheine and adenosine 3',5'-bisphosphate. Mediates the hydrolysis of a wide range of CoA esters, including choloyl-CoA and branched-chain fatty-acyl-CoA esters and at low substrate concentrations medium and long-chain fatty-acyl-CoA esters are the primary substrates. Highest activity seen with medium-chain acyl-CoA esters and higher rates of activity seen with the unsaturated acyl-CoA esters compared with the saturated esters. Exhibits decapping activity towards dpCoA-capped RNAs in vitro. This Homo sapiens (Human) protein is Acyl-coenzyme A diphosphatase NUDT19 (NUDT19).